The primary structure comprises 469 residues: Glutamine synthetase (469 aa).

Residues 14–98 (NDVKYVDLRF…VVCDVLEPTT (85 aa)) form the GS beta-grasp domain. The GS catalytic domain maps to 106 to 469 (PRGIAKKAMA…PVEFEMYYSV (364 aa)). E131 and E133 together coordinate Mg(2+). E209 serves as a coordination point for ATP. Mg(2+) contacts are provided by E214 and E221. Residues 265-266 (NG) and G266 contribute to the L-glutamate site. A Mg(2+)-binding site is contributed by H270. ATP is bound by residues 272–274 (HQS) and S274. L-glutamate contacts are provided by R322, E328, and R340. R340, R345, and K353 together coordinate ATP. E358 contributes to the Mg(2+) binding site. R360 contributes to the L-glutamate binding site. Y398 is modified (O-AMP-tyrosine).

The protein belongs to the glutamine synthetase family. Oligomer of 12 subunits arranged in the form of two hexameric ring. Requires Mg(2+) as cofactor.

The protein resides in the cytoplasm. The enzyme catalyses L-glutamate + NH4(+) + ATP = L-glutamine + ADP + phosphate + H(+). With respect to regulation, the activity of this enzyme could be controlled by adenylation under conditions of abundant glutamine. Functionally, catalyzes the ATP-dependent biosynthesis of glutamine from glutamate and ammonia. This is Glutamine synthetase from Azorhizobium caulinodans (strain ATCC 43989 / DSM 5975 / JCM 20966 / LMG 6465 / NBRC 14845 / NCIMB 13405 / ORS 571).